Reading from the N-terminus, the 98-residue chain is Integration host factor subunit alpha (98 aa).

The interval 49–70 (FGNFDLRDKNQRPGRNPKTGED) is disordered.

This sequence belongs to the bacterial histone-like protein family. As to quaternary structure, heterodimer of an alpha and a beta chain.

Functionally, this protein is one of the two subunits of integration host factor, a specific DNA-binding protein that functions in genetic recombination as well as in transcriptional and translational control. This Sodalis glossinidius (strain morsitans) protein is Integration host factor subunit alpha.